We begin with the raw amino-acid sequence, 197 residues long: Phosphoheptose isomerase (197 aa).

The 162-residue stretch at 36 to 197 folds into the SIS domain; it reads MVNALLNEGK…IDSQLFGSEE (162 aa). 51–53 is a substrate binding site; sequence NGG. Zn(2+) contacts are provided by H60 and E64. Substrate contacts are provided by residues E64, 93 to 94, 119 to 121, S124, and Q174; these read ND and STS. 2 residues coordinate Zn(2+): Q174 and H182.

This sequence belongs to the SIS family. GmhA subfamily. In terms of assembly, homotetramer. The cofactor is Zn(2+).

Its subcellular location is the cytoplasm. It carries out the reaction 2 D-sedoheptulose 7-phosphate = D-glycero-alpha-D-manno-heptose 7-phosphate + D-glycero-beta-D-manno-heptose 7-phosphate. Its pathway is carbohydrate biosynthesis; D-glycero-D-manno-heptose 7-phosphate biosynthesis; D-glycero-alpha-D-manno-heptose 7-phosphate and D-glycero-beta-D-manno-heptose 7-phosphate from sedoheptulose 7-phosphate: step 1/1. Functionally, catalyzes the isomerization of sedoheptulose 7-phosphate in D-glycero-D-manno-heptose 7-phosphate. In Pseudomonas fluorescens (strain Pf0-1), this protein is Phosphoheptose isomerase.